Consider the following 170-residue polypeptide: Probable T4-type lysozyme 1 (170 aa).

Glu13 acts as the Proton donor in catalysis. Catalysis depends on Asp22, which acts as the Nucleophile.

This sequence belongs to the glycosyl hydrolase 24 family.

It catalyses the reaction Hydrolysis of (1-&gt;4)-beta-linkages between N-acetylmuramic acid and N-acetyl-D-glucosamine residues in a peptidoglycan and between N-acetyl-D-glucosamine residues in chitodextrins.. This chain is Probable T4-type lysozyme 1, found in Dictyostelium discoideum (Social amoeba).